Here is a 504-residue protein sequence, read N- to C-terminus: Pre-mRNA-processing factor 19 (504 aa).

Ser2 is subject to N-acetylserine. Positions 2-73 (SLICSISNEV…KPPSATSIPA (72 aa)) constitute a U-box domain. Positions 68–223 (ATSIPAILKA…VGLHSASIPG (156 aa)) are may mediate interaction with PSMC5. Residues Lys122, Lys179, Lys244, and Lys261 each carry the N6-acetyllysine modification. One copy of the WD 1 repeat lies at 219–259 (ASIPGILALDLCPSDTNKILTGGADKNVVVFDKSSEQILAT). 6 WD repeats span residues 262 to 301 (GHTKKVTSVVFHPSQELVFSASPDATIRIWSVPNASCVQV), 304 to 345 (AHES…TKVT), 348 to 387 (TSGCSLTCAQFHPDGLIFGTGTMDSQIKIWDLKERTNVAN), 390 to 429 (GHSGPITSIAFSENGYYLATAADDSSVKLWDLRKLKNFKT), 433 to 472 (DNNFEVKSLIFDQSGTYLALGGTDVQIYICKQWTEILHFT), and 473 to 503 (EHSGLTTGVAFGHHAKFIASTGMDRSLKFYS).

Belongs to the WD repeat PRP19 family. In terms of assembly, homotetramer. Component of activated, catalytic and post-catalytic spliceosomes. Component of the Prp19 complex/PRP19C/Nineteen complex/NTC and related complexes described as PRP19-CDC5L splicing complex and PSO4 complex. A homotetramer of PRPF19, CDC5L, PLRG1 and BCAS2 constitute the core of those complexes. The interaction with CDC5L, PLRG1 and BCAS2 is direct within this core complex. At least three less stably associated proteins CTNNBL1, CWC15 and HSPA8 are found in the Prp19 complex. The Prp19 complex associates with the spliceosome during its assembly and remodeling recruiting additional proteins. Component of the XAB2 complex, a multimeric protein complex composed of XAB2, PRPF19, AQR, ZNF830, ISY1, and PPIE. Interacts with CWC22 and EIF4A3 in an RNA-independent manner. Interacts with RPA1 and RPA2; the PRP19-CDC5L complex is recruited to the sites of DNA repair where it interacts with the replication protein A complex (RPA). Interacts with SETMAR; required for SETMAR recruitment to site of DNA damage. Interacts with U2AF2; the interaction is direct and recruits the Prp19 complex to RNA polymerase II C-terminal domain (CTD) and the pre-mRNA. Interacts with PRPF3. Interacts with APEX1, DNTT and PSMB4. Interacts with PSMC5. Interacts with KNSTRN. Interacts (via N-terminus) with CDC5L. Interacts with KHDC4. Interacts with USB1. Interacts with DDX41.

It is found in the nucleus. Its subcellular location is the nucleoplasm. It localises to the cytoplasm. The protein resides in the cytoskeleton. The protein localises to the spindle. It is found in the lipid droplet. It carries out the reaction S-ubiquitinyl-[E2 ubiquitin-conjugating enzyme]-L-cysteine + [acceptor protein]-L-lysine = [E2 ubiquitin-conjugating enzyme]-L-cysteine + N(6)-ubiquitinyl-[acceptor protein]-L-lysine.. Its pathway is protein modification; protein ubiquitination. Its function is as follows. Ubiquitin-protein ligase which is a core component of several complexes mainly involved pre-mRNA splicing and DNA repair. Required for pre-mRNA splicing as component of the spliceosome. Core component of the PRP19C/Prp19 complex/NTC/Nineteen complex which is part of the spliceosome and participates in its assembly, its remodeling and is required for its activity. During assembly of the spliceosome, mediates 'Lys-63'-linked polyubiquitination of the U4 spliceosomal protein PRPF3. Ubiquitination of PRPF3 allows its recognition by the U5 component PRPF8 and stabilizes the U4/U5/U6 tri-snRNP spliceosomal complex. Recruited to RNA polymerase II C-terminal domain (CTD) and the pre-mRNA, it may also couple the transcriptional and spliceosomal machineries. The XAB2 complex, which contains PRPF19, is also involved in pre-mRNA splicing, transcription and transcription-coupled repair. Beside its role in pre-mRNA splicing PRPF19, as part of the PRP19-CDC5L complex, plays a role in the DNA damage response/DDR. It is recruited to the sites of DNA damage by the RPA complex where PRPF19 directly ubiquitinates RPA1 and RPA2. 'Lys-63'-linked polyubiquitination of the RPA complex allows the recruitment of the ATR-ATRIP complex and the activation of ATR, a master regulator of the DNA damage response. May also play a role in DNA double-strand break (DSB) repair by recruiting the repair factor SETMAR to altered DNA. As part of the PSO4 complex may also be involved in the DNA interstrand cross-links/ICLs repair process. In addition, may also mediate 'Lys-48'-linked polyubiquitination of substrates and play a role in proteasomal degradation. May play a role in the biogenesis of lipid droplets. May play a role in neural differentiation possibly through its function as part of the spliceosome. The polypeptide is Pre-mRNA-processing factor 19 (PRPF19) (Bos taurus (Bovine)).